The sequence spans 353 residues: MVQRQQTALVGTDDGGIRLSSTETIPNITGDSVLIKTKAVSVNPVDTKMIGPYVTPGAVAGFDFAGVVEMVGPDATKCDIRVGDRVCTAIMGMNPLDPTVGAFAEYTAAVEWILLKIPPNLSFEEGASLGISFMTTGLALFKSLGLPGNPLSPATEKLPVLVYGGSSATGTAAIQLVKLAGFAPITTCSPRNFELVKSYGASAVFDYNDPDCIRDIKKHTKNNIRYALDCISTTQSMQFCYQAIGRAGGKYTALEPFSEAVARTRKMVKPDWIMGPQMLGKEIRWPEPHWRPANAEMGEFGVYWTAVLRKLLDNNLIRPHAIVVREGGLEKVLDGIEDIRAKKISGKKLVFTL.

45 to 48 lines the NADP(+) pocket; it reads VDTK. Substrate is bound at residue 131 to 138; it reads ISFMTTGL. NADP(+) is bound by residues 166–169, 189–192, Tyr207, and 254–255; these read SSAT, SPRN, and LE. 275-279 provides a ligand contact to substrate; the sequence is GPQML. 344–345 contributes to the NADP(+) binding site; sequence IS.

Belongs to the zinc-containing alcohol dehydrogenase family. In terms of assembly, monomer.

The enzyme catalyses L-serine + 7 malonyl-CoA + acetyl-CoA + 2 S-adenosyl-L-methionine + ATP + 8 NADPH + 11 H(+) = (5S)-3-[(2E,6R,8E,10E,12E)-2,6-dimethyltetradeca-2,8,10,12-tetraenoyl]-5-(hydroxymethyl)pyrrolidine-2,4-dione + AMP + 2 S-adenosyl-L-homocysteine + 7 CO2 + diphosphate + 8 NADP(+) + 8 CoA + 6 H2O. It participates in mycotoxin biosynthesis. Functionally, trans-enoyl reductase; part of the gene cluster that mediates the biosynthesis of HIV-1 integrase inhibitor equisetin and of fusarisetin A, both trans-fused decalin-containing tetramic acids showing also antimicrobial activity. The PKS module of fsa1 together with the enoylreductase fsa3 catalyze the formation of the polyketide unit which is then conjugated to L-serine by the condensation domain of the fsa1 NRPS module. Activity of the Dieckmann cyclase domain (RED) results in release of the Dieckmann product intermediate. Diels-Alderase fsa2 is involved in endo-selective Diels-Alder cycloaddition to form the decalin ring, leading to the production of N-desmethylequisetin also called trichosetin. Subsequent N-methylation is carried out by fsa4 to give equisetin. The enzymatic gene responsible for the conversion of equisetin to fusarisetin A has not been identified yet and is probably located outside of the fsa cluster. The polypeptide is Trans-enoyl reductase fsa3 (Fusarium sp. (strain FN080326)).